Here is a 136-residue protein sequence, read N- to C-terminus: Large ribosomal subunit protein uL16 (136 aa).

This sequence belongs to the universal ribosomal protein uL16 family. Part of the 50S ribosomal subunit.

Its function is as follows. Binds 23S rRNA and is also seen to make contacts with the A and possibly P site tRNAs. In Rickettsia akari (strain Hartford), this protein is Large ribosomal subunit protein uL16.